Reading from the N-terminus, the 93-residue chain is Large ribosomal subunit protein uL23cz/uL23cy (93 aa).

Belongs to the universal ribosomal protein uL23 family. In terms of assembly, part of the 50S ribosomal subunit.

Its subcellular location is the plastid. It is found in the chloroplast. In terms of biological role, binds to 23S rRNA. The sequence is that of Large ribosomal subunit protein uL23cz/uL23cy (rpl23-A) from Arabidopsis thaliana (Mouse-ear cress).